Here is a 137-residue protein sequence, read N- to C-terminus: Large ribosomal subunit protein uL16 (137 aa).

This sequence belongs to the universal ribosomal protein uL16 family. In terms of assembly, part of the 50S ribosomal subunit.

Its function is as follows. Binds 23S rRNA and is also seen to make contacts with the A and possibly P site tRNAs. This Psychrobacter arcticus (strain DSM 17307 / VKM B-2377 / 273-4) protein is Large ribosomal subunit protein uL16.